Consider the following 205-residue polypeptide: Small ribosomal subunit protein uS4 (205 aa).

The disordered stretch occupies residues 18–46 (NIWGRSKSPVNRREYGPGQHGQRRKGKLS). In terms of domain architecture, S4 RNA-binding spans 94–157 (RRLDAVVYRA…RQMTLVLEAQ (64 aa)).

The protein belongs to the universal ribosomal protein uS4 family. As to quaternary structure, part of the 30S ribosomal subunit. Contacts protein S5. The interaction surface between S4 and S5 is involved in control of translational fidelity.

Functionally, one of the primary rRNA binding proteins, it binds directly to 16S rRNA where it nucleates assembly of the body of the 30S subunit. With S5 and S12 plays an important role in translational accuracy. This Xanthobacter autotrophicus (strain ATCC BAA-1158 / Py2) protein is Small ribosomal subunit protein uS4.